A 325-amino-acid chain; its full sequence is Large ribosomal subunit protein uL1m (325 aa).

The transit peptide at 1–50 directs the protein to the mitochondrion; the sequence is MAATVRCFGRVLIHHQRCSLATVTSQTSLYPCCIYVPVPNRHFAAAAKPA. The interval 47–66 is disordered; it reads AKPAKKTKKGTKEKASNEKK. Residues 56–66 are compositionally biased toward basic and acidic residues; it reads GTKEKASNEKK.

Belongs to the universal ribosomal protein uL1 family.

Its subcellular location is the mitochondrion. The chain is Large ribosomal subunit protein uL1m (MRPL1) from Bos taurus (Bovine).